The sequence spans 246 residues: Transcription factor A, mitochondrial (246 aa).

The N-terminal 42 residues, 1–42 (MALLRGVWGVLNALGKSGADLCAGCGSRLRYPFSFAYVPKWF), are a transit peptide targeting the mitochondrion. The HMG box 1 DNA-binding region spans 50-118 (PKKPMTSYVR…VYKEEINRIQ (69 aa)). Phosphoserine; by PKA is present on residues serine 56 and serine 61. Threonine 122 carries the phosphothreonine modification. A DNA-binding region (HMG box 2) is located at residues 155 to 219 (PKRPRSAYNI…RYYNEMKSWE (65 aa)). A Phosphoserine; by PKA modification is found at serine 160. A phosphoserine mark is found at serine 193 and serine 195.

In terms of assembly, monomer; binds DNA as a monomer. Homodimer. Component of the mitochondrial transcription initiation complex, composed at least of TFB2M, TFAM and POLRMT. In this complex TFAM recruits POLRMT to the promoter whereas TFB2M induces structural changes in POLRMT to enable promoter opening and trapping of the DNA non-template strand. Upon metabolic stress, forms a complex composed of FOXO3, SIRT3, TFAM and POLRMT. Interacts with TFB1M and TFB2M. Interacts with CLPX; this enhances DNA-binding. Post-translationally, phosphorylation by PKA within the HMG box 1 impairs DNA binding and promotes degradation by the AAA+ Lon protease.

The protein resides in the mitochondrion. Its subcellular location is the mitochondrion matrix. It is found in the mitochondrion nucleoid. Binds to the mitochondrial light strand promoter and functions in mitochondrial transcription regulation. Component of the mitochondrial transcription initiation complex, composed at least of TFB2M, TFAM and POLRMT that is required for basal transcription of mitochondrial DNA. In this complex, TFAM recruits POLRMT to a specific promoter whereas TFB2M induces structural changes in POLRMT to enable promoter opening and trapping of the DNA non-template strand. Required for accurate and efficient promoter recognition by the mitochondrial RNA polymerase. Promotes transcription initiation from the HSP1 and the light strand promoter by binding immediately upstream of transcriptional start sites. Is able to unwind DNA. Bends the mitochondrial light strand promoter DNA into a U-turn shape via its HMG boxes. Required for maintenance of normal levels of mitochondrial DNA. May play a role in organizing and compacting mitochondrial DNA. The polypeptide is Transcription factor A, mitochondrial (Bos taurus (Bovine)).